A 307-amino-acid polypeptide reads, in one-letter code: Transposase InsD for insertion element IS2-9 (307 aa).

In terms of domain architecture, Integrase catalytic spans 112 to 295 (KPAVPPSKRA…SPREYLRQRA (184 aa)).

Functionally, involved in the transposition of the insertion sequence IS2. The polypeptide is Transposase InsD for insertion element IS2-9 (Escherichia coli (strain K12)).